We begin with the raw amino-acid sequence, 333 residues long: L-lactate dehydrogenase (333 aa).

NAD(+)-binding positions include 29–57 (GQVG…VADK) and Arg99. Residues Arg106, Asn138, and Arg169 each coordinate substrate. Position 138 (Asn138) interacts with NAD(+). The active-site Proton acceptor is His193. Substrate is bound at residue Thr249.

The protein belongs to the LDH/MDH superfamily. LDH family. In terms of assembly, homotetramer.

Its subcellular location is the cytoplasm. It carries out the reaction (S)-lactate + NAD(+) = pyruvate + NADH + H(+). Its pathway is fermentation; pyruvate fermentation to lactate; (S)-lactate from pyruvate: step 1/1. The polypeptide is L-lactate dehydrogenase (ldh-1) (Caenorhabditis elegans).